The following is a 575-amino-acid chain: Carboxylesterase 5A (575 aa).

The signal sequence occupies residues 1–27; the sequence is MSGEWGHLGQTLIWAVWVLAAATEGPA. Asparagine 82 is a glycosylation site (N-linked (GlcNAc...) asparagine). Cysteine 94 and cysteine 121 are disulfide-bonded. The active-site Acyl-ester intermediate is serine 226. A disulfide bridge connects residues cysteine 280 and cysteine 291. Residue asparagine 281 is glycosylated (N-linked (GlcNAc...) asparagine). Glutamate 345 (charge relay system) is an active-site residue. Asparagine 363 is a glycosylation site (N-linked (GlcNAc...) asparagine). The active-site Charge relay system is histidine 454. A glycan (N-linked (GlcNAc...) asparagine) is linked at asparagine 524.

It belongs to the type-B carboxylesterase/lipase family. Post-translationally, N-glycosylated.

It localises to the secreted. The catalysed reaction is a carboxylic ester + H2O = an alcohol + a carboxylate + H(+). In terms of biological role, involved in the detoxification of xenobiotics and in the activation of ester and amide prodrugs. The polypeptide is Carboxylesterase 5A (CES5A) (Canis lupus familiaris (Dog)).